The following is an 888-amino-acid chain: Leucine--tRNA ligase (888 aa).

Residues 43 to 53 (PYPSGRIHMGH) carry the 'HIGH' region motif. The 'KMSKS' region signature appears at 644–648 (KMSKS). An ATP-binding site is contributed by Lys647.

The protein belongs to the class-I aminoacyl-tRNA synthetase family.

Its subcellular location is the cytoplasm. The catalysed reaction is tRNA(Leu) + L-leucine + ATP = L-leucyl-tRNA(Leu) + AMP + diphosphate. The polypeptide is Leucine--tRNA ligase (Rhodopseudomonas palustris (strain BisA53)).